The primary structure comprises 438 residues: uncharacterized protein (438 aa).

Disordered regions lie at residues 1–22 and 156–264; these read MRDN…TYDP and DTAK…PWRP. The span at 156–170 shows a compositional bias: basic and acidic residues; sequence DTAKSNEKLQGDESK. A compositionally biased stretch (low complexity) spans 171–189; it reads SSNGSSSTSTTTQRGSTNS. Over residues 191–206 the composition is skewed to basic and acidic residues; that stretch reads TKVKALKIEVKKKSDS.

The protein belongs to the adhesin P1 family.

This is an uncharacterized protein from Mycoplasma pneumoniae (strain ATCC 29342 / M129 / Subtype 1) (Mycoplasmoides pneumoniae).